A 172-amino-acid chain; its full sequence is Cytidylate kinase (172 aa).

8–16 (GPPGSGKST) is a binding site for ATP.

It belongs to the cytidylate kinase family. Type 2 subfamily.

It localises to the cytoplasm. It catalyses the reaction CMP + ATP = CDP + ADP. It carries out the reaction dCMP + ATP = dCDP + ADP. The polypeptide is Cytidylate kinase (Ignicoccus hospitalis (strain KIN4/I / DSM 18386 / JCM 14125)).